The sequence spans 404 residues: Propionate kinase (404 aa).

It belongs to the acetokinase family. PduW subfamily.

The protein localises to the cytoplasm. The catalysed reaction is propanoate + ATP = propanoyl phosphate + ADP. Its pathway is polyol metabolism; 1,2-propanediol degradation. In terms of biological role, works with phosphate acetyltransferase (pta) to capture exogenous propionate and regenerate propionyl-CoA during degradation of 1,2-propanediol (1,2-PD). The chain is Propionate kinase from Klebsiella pneumoniae (strain 342).